Consider the following 218-residue polypeptide: Protein GrpE (218 aa).

Residues 1–10 (MSGEASTPAQ) show a composition bias toward polar residues. Disordered regions lie at residues 1 to 44 (MSGE…DPAE) and 198 to 218 (SMGPGPSADAEGAASAEAEDS). Residues 200-218 (GPGPSADAEGAASAEAEDS) are compositionally biased toward low complexity.

The protein belongs to the GrpE family. Homodimer.

The protein resides in the cytoplasm. Participates actively in the response to hyperosmotic and heat shock by preventing the aggregation of stress-denatured proteins, in association with DnaK and GrpE. It is the nucleotide exchange factor for DnaK and may function as a thermosensor. Unfolded proteins bind initially to DnaJ; upon interaction with the DnaJ-bound protein, DnaK hydrolyzes its bound ATP, resulting in the formation of a stable complex. GrpE releases ADP from DnaK; ATP binding to DnaK triggers the release of the substrate protein, thus completing the reaction cycle. Several rounds of ATP-dependent interactions between DnaJ, DnaK and GrpE are required for fully efficient folding. In Parasynechococcus marenigrum (strain WH8102), this protein is Protein GrpE.